Reading from the N-terminus, the 345-residue chain is Aspartate--ammonia ligase (345 aa).

The protein belongs to the class-II aminoacyl-tRNA synthetase family. AsnA subfamily.

It localises to the cytoplasm. The catalysed reaction is L-aspartate + NH4(+) + ATP = L-asparagine + AMP + diphosphate + H(+). It functions in the pathway amino-acid biosynthesis; L-asparagine biosynthesis; L-asparagine from L-aspartate (ammonia route): step 1/1. The sequence is that of Aspartate--ammonia ligase from Parabacteroides distasonis (strain ATCC 8503 / DSM 20701 / CIP 104284 / JCM 5825 / NCTC 11152).